The sequence spans 572 residues: Proline--tRNA ligase (572 aa).

Belongs to the class-II aminoacyl-tRNA synthetase family. ProS type 1 subfamily. In terms of assembly, homodimer.

It localises to the cytoplasm. It catalyses the reaction tRNA(Pro) + L-proline + ATP = L-prolyl-tRNA(Pro) + AMP + diphosphate. Its function is as follows. Catalyzes the attachment of proline to tRNA(Pro) in a two-step reaction: proline is first activated by ATP to form Pro-AMP and then transferred to the acceptor end of tRNA(Pro). As ProRS can inadvertently accommodate and process non-cognate amino acids such as alanine and cysteine, to avoid such errors it has two additional distinct editing activities against alanine. One activity is designated as 'pretransfer' editing and involves the tRNA(Pro)-independent hydrolysis of activated Ala-AMP. The other activity is designated 'posttransfer' editing and involves deacylation of mischarged Ala-tRNA(Pro). The misacylated Cys-tRNA(Pro) is not edited by ProRS. This Shigella dysenteriae serotype 1 (strain Sd197) protein is Proline--tRNA ligase.